Consider the following 92-residue polypeptide: MPRSLKKGPFVDEHLLSKVDAQNDKGTKQVIKTWSRRSTILPDFIGHTFAVHDGRKHVPVFIDDSMVGHKLGEFAPTKTFKGHVKDDKKGRR.

This sequence belongs to the universal ribosomal protein uS19 family.

Functionally, protein S19 forms a complex with S13 that binds strongly to the 16S ribosomal RNA. The protein is Small ribosomal subunit protein uS19 of Corynebacterium kroppenstedtii (strain DSM 44385 / JCM 11950 / CIP 105744 / CCUG 35717).